A 343-amino-acid chain; its full sequence is tRNA-specific 2-thiouridylase MnmA (343 aa).

Residues 7–14 (ALSGGVDS) and M33 contribute to the ATP site. C87 serves as the catalytic Nucleophile. A disulfide bond links C87 and C184. G111 contacts ATP. An interaction with tRNA region spans residues 135–137 (KDQ). Residue C184 is the Cysteine persulfide intermediate of the active site. Positions 289–290 (RY) are interaction with tRNA.

This sequence belongs to the MnmA/TRMU family.

The protein resides in the cytoplasm. It catalyses the reaction S-sulfanyl-L-cysteinyl-[protein] + uridine(34) in tRNA + AH2 + ATP = 2-thiouridine(34) in tRNA + L-cysteinyl-[protein] + A + AMP + diphosphate + H(+). In terms of biological role, catalyzes the 2-thiolation of uridine at the wobble position (U34) of tRNA, leading to the formation of s(2)U34. This Desulforudis audaxviator (strain MP104C) protein is tRNA-specific 2-thiouridylase MnmA.